A 202-amino-acid chain; its full sequence is T-cell surface glycoprotein CD3 epsilon chain (202 aa).

A signal peptide spans 1–21; sequence MQSRNLWRILGLCLLSVGAWG. Over 22-122 the chain is Extracellular; it reads QDEDFKASDD…VCANCIEVNL (101 aa). Residues 37 to 107 enclose the Ig-like domain; the sequence is PEKRFKVSIS…ADSIKEKSYL (71 aa). A disulfide bridge links Cys54 with Cys96. The helical transmembrane segment at 123-143 threads the bilayer; it reads MAVVTIIVADICLTLGLLLMV. The Cytoplasmic segment spans residues 144 to 202; sequence YYWSKTRKANAKPVMRGTGAGSRPRGQNKEKPPPVPNPDYEPIRKGQQDLYSGLNQRGI. Residues 156–202 form a disordered region; the sequence is PVMRGTGAGSRPRGQNKEKPPPVPNPDYEPIRKGQQDLYSGLNQRGI. The segment at 170–187 is NUMB-binding region; it reads QNKEKPPPVPNPDYEPIR. One can recognise an ITAM domain in the interval 173 to 200; it reads EKPPPVPNPDYEPIRKGQQDLYSGLNQR. A proline-rich sequence region spans residues 174–181; it reads KPPPVPNP. Residues Tyr183 and Tyr194 each carry the phosphotyrosine modification. Polar residues predominate over residues 192–202; the sequence is DLYSGLNQRGI.

In terms of assembly, the TCR-CD3 complex is composed of a CD3D/CD3E and a CD3G/CD3E heterodimers that preferentially associate with TCRalpha and TCRbeta, respectively, to form TCRalpha/CD3E/CD3G and TCRbeta/CD3G/CD3E trimers. In turn, the hexamer interacts with CD3Z homodimer to form the TCR-CD3 complex. Alternatively, TCRalpha and TCRbeta can be replaced by TCRgamma and TCRdelta. Interacts with CD6. Interacts (via Proline-rich sequence) with NCK1; the interaction is ligand dependent but independent of tyrosine kinase activation. Post-translationally, phosphorylated on Tyr residues after T-cell receptor triggering by LCK in association with CD4/CD8.

The protein resides in the cell membrane. Its function is as follows. Part of the TCR-CD3 complex present on T-lymphocyte cell surface that plays an essential role in adaptive immune response. When antigen presenting cells (APCs) activate T-cell receptor (TCR), TCR-mediated signals are transmitted across the cell membrane by the CD3 chains CD3D, CD3E, CD3G and CD3Z. All CD3 chains contain immunoreceptor tyrosine-based activation motifs (ITAMs) in their cytoplasmic domain. Upon TCR engagement, these motifs become phosphorylated by Src family protein tyrosine kinases LCK and FYN, resulting in the activation of downstream signaling pathways. In addition of this role of signal transduction in T-cell activation, CD3E plays an essential role in correct T-cell development. Also participates in internalization and cell surface down-regulation of TCR-CD3 complexes via endocytosis sequences present in CD3E cytosolic region. In addition to its role as a TCR coreceptor, it serves as a receptor for ITPRIPL1. Ligand recognition inhibits T-cell activation by promoting interaction with NCK1, which prevents CD3E-ZAP70 interaction and blocks the ERK-NFkB signaling cascade and calcium influx. This Canis lupus familiaris (Dog) protein is T-cell surface glycoprotein CD3 epsilon chain (CD3E).